Here is a 250-residue protein sequence, read N- to C-terminus: Protein lin-28 homolog B (250 aa).

2 disordered regions span residues 1–27 (MAEAGASKGGEEPGRLPEHEEEEESPL) and 98–126 (RVTGPGGSPCLGSERRPKGKTVQKRKPKG). Residues 9–18 (GGEEPGRLPE) show a composition bias toward basic and acidic residues. The region spanning 29–102 (HGAGHCKWFN…GLESIRVTGP (74 aa)) is the CSD domain. Basic residues predominate over residues 114–125 (PKGKTVQKRKPK). CCHC-type zinc fingers lie at residues 127-144 (DRCYNCGGLDHHAKECSL) and 149-166 (KKCHYCQSIMHMVANCPH). Zn(2+) is bound by residues C129, C132, H137, C142, C151, C154, H159, and C164. Residues 165-250 (PHKTVSQQPT…GPSVQKRKKT (86 aa)) are disordered. Positions 168–177 (TVSQQPTSSQ) are enriched in polar residues. Low complexity predominate over residues 200–209 (GYSSPSYSQE). Residues 210 to 219 (GRSEISERSG) show a composition bias toward basic and acidic residues.

This sequence belongs to the lin-28 family.

The protein resides in the nucleus. It localises to the nucleolus. Functionally, suppressor of specific microRNA (miRNA) biogenesis. Binds target primary miRNA transcripts and sequester them in the nucleolus, away from the microprocessor complex, hence preventing their processing into mature miRNA. The specific interaction with target pri-miRNAs occurs via an 5'-GGAG-3' motif in the pre-miRNA terminal loop. This Gallus gallus (Chicken) protein is Protein lin-28 homolog B (LIN28B).